Reading from the N-terminus, the 288-residue chain is Rhythmically expressed gene 5 protein (288 aa).

As to expression, expressed in head, but not in the body. Expression levels oscillate with the circadian rhythm.

Involved in the generation of biological rhythms (Potential). In the head, oscillates in abundance with a daily peak during early night, even under constant darkness. Oscillation is dependent on period (per) function. In Drosophila melanogaster (Fruit fly), this protein is Rhythmically expressed gene 5 protein (Reg-5).